The following is a 193-amino-acid chain: SCO1 protein homolog (193 aa).

The first 18 residues, 1–18 (MKVIKGLTAGLIFLFLCA), serve as a signal peptide directing secretion. The N-palmitoyl cysteine moiety is linked to residue C19. Residue C19 is the site of S-diacylglycerol cysteine attachment. A Thioredoxin domain is found at 26 to 191 (DPLNYEVEPF…IISDVKSAST (166 aa)). 3 residues coordinate Cu cation: C64, C68, and H154.

The protein belongs to the SCO1/2 family. As to quaternary structure, monomer.

The protein localises to the cell membrane. Functionally, necessary for insertion of copper into the active site of cytochrome c oxidase. May play a role in copper homeostasis or redox signaling. This chain is SCO1 protein homolog (ypmQ), found in Bacillus subtilis (strain 168).